The chain runs to 132 residues: Small ribosomal subunit protein uS9 (132 aa).

This sequence belongs to the universal ribosomal protein uS9 family.

The polypeptide is Small ribosomal subunit protein uS9 (Mesomycoplasma hyopneumoniae (strain 232) (Mycoplasma hyopneumoniae)).